The chain runs to 132 residues: Agouti-signaling protein (132 aa).

Residues 1–22 (MDVTXLLLATLLVFLCCFAAYS) form the signal peptide. N-linked (GlcNAc...) asparagine glycosylation is present at Asn39. A disordered region spans residues 62-93 (ISRKEAENKRSSKKEASKQKVARPRTPLSVPC). A compositionally biased stretch (basic and acidic residues) spans 64–79 (RKEAENKRSSKKEASK). Intrachain disulfides connect Cys93-Cys108, Cys100-Cys114, Cys107-Cys125, Cys111-Cys132, and Cys116-Cys123. The Agouti domain occupies 93 to 132 (CVSTRGSCKPPAPACCHPCASCQCRFFRSACSCRVINVNC).

It is found in the secreted. Involved in the regulation of melanogenesis. The binding of ASP to MC1R precludes alpha-MSH initiated signaling and thus blocks production of cAMP, leading to a down-regulation of eumelanogenesis (brown/black pigment) and thus increasing synthesis of pheomelanin (yellow/red pigment). The sequence is that of Agouti-signaling protein (ASIP) from Leontopithecus chrysomelas (Golden-headed lion tamarin).